We begin with the raw amino-acid sequence, 318 residues long: NADH-ubiquinone oxidoreductase chain 1 (318 aa).

8 helical membrane-spanning segments follow: residues 2 to 22, 69 to 89, 102 to 122, 146 to 166, 171 to 191, 222 to 242, 253 to 273, and 294 to 314; these read FLIN…FLTL, LLFI…WLPI, ILFI…SGWA, LAII…SSLI, YMWI…STLA, LFFL…AILF, EMFT…FLWI, and LPLT…LSSI.

The protein belongs to the complex I subunit 1 family. In terms of assembly, core subunit of respiratory chain NADH dehydrogenase (Complex I) which is composed of 45 different subunits.

The protein resides in the mitochondrion inner membrane. The catalysed reaction is a ubiquinone + NADH + 5 H(+)(in) = a ubiquinol + NAD(+) + 4 H(+)(out). Functionally, core subunit of the mitochondrial membrane respiratory chain NADH dehydrogenase (Complex I) which catalyzes electron transfer from NADH through the respiratory chain, using ubiquinone as an electron acceptor. Essential for the catalytic activity and assembly of complex I. This Oryctolagus cuniculus (Rabbit) protein is NADH-ubiquinone oxidoreductase chain 1 (MT-ND1).